A 147-amino-acid chain; its full sequence is MADFDMVLKCWGPVEADYTTHGSLVLTRLFTEHPETLKLFPKFAGIAHGDLAGDAGVSAHGATVLNKLGDLLKARGAHAALLKPLSSSHATKHKIPIINFKLIAEVIGKVMEEKAGLDAAGQTALRNVMAVIIADMEADYKELGFTE.

The Globin domain maps to 2-141 (ADFDMVLKCW…IIADMEADYK (140 aa)). His-60 is a nitrite binding site. His-60 lines the O2 pocket. Residue His-89 participates in heme b binding.

This sequence belongs to the globin family. Monomeric.

The protein resides in the cytoplasm. The protein localises to the sarcoplasm. It carries out the reaction Fe(III)-heme b-[protein] + nitric oxide + H2O = Fe(II)-heme b-[protein] + nitrite + 2 H(+). It catalyses the reaction H2O2 + AH2 = A + 2 H2O. Its function is as follows. Monomeric heme protein which primary function is to store oxygen and facilitate its diffusion within muscle tissues. Reversibly binds oxygen through a pentacoordinated heme iron and enables its timely and efficient release as needed during periods of heightened demand. Depending on the oxidative conditions of tissues and cells, and in addition to its ability to bind oxygen, it also has a nitrite reductase activity whereby it regulates the production of bioactive nitric oxide. Under stress conditions, like hypoxia and anoxia, it also protects cells against reactive oxygen species thanks to its pseudoperoxidase activity. The sequence is that of Myoglobin (mb) from Gobionotothen gibberifrons (Humped rockcod).